The chain runs to 1215 residues: Chromosome segregation protein sudA (1215 aa).

Residue 32–39 (GRNGSGKS) coordinates ATP. A coiled-coil region spans residues 177–522 (KIMHETNSKR…LSQMMDHNTS (346 aa)). The interval 313–332 (SDNQAAAQESKARHDESLKA) is disordered. The SMC hinge domain occupies 538-650 (EGVYGTLAEL…PNLQVASQYA (113 aa)). A disordered region spans residues 654–676 (GVNATTPEGDRSDKRGALTGGFH). The stretch at 684-1091 (DAVKNLAKWR…EEAKHSVENY (408 aa)) forms a coiled coil.

This sequence belongs to the SMC family. SMC3 subfamily.

It localises to the nucleus. In terms of biological role, involved in chromosome segregation in mitosis. This chain is Chromosome segregation protein sudA (sudA), found in Emericella nidulans (strain FGSC A4 / ATCC 38163 / CBS 112.46 / NRRL 194 / M139) (Aspergillus nidulans).